The primary structure comprises 377 residues: Glutamate 5-kinase (377 aa).

Lys-21 contacts ATP. Ser-61, Asp-149, and Asn-161 together coordinate substrate. ATP contacts are provided by residues 181 to 182 (SD) and 223 to 229 (SGGMTSK). The PUA domain occupies 286-363 (RGSVQVDAGA…REHEELLGYA (78 aa)).

Belongs to the glutamate 5-kinase family.

The protein resides in the cytoplasm. The enzyme catalyses L-glutamate + ATP = L-glutamyl 5-phosphate + ADP. The protein operates within amino-acid biosynthesis; L-proline biosynthesis; L-glutamate 5-semialdehyde from L-glutamate: step 1/2. Its function is as follows. Catalyzes the transfer of a phosphate group to glutamate to form L-glutamate 5-phosphate. This Novosphingobium aromaticivorans (strain ATCC 700278 / DSM 12444 / CCUG 56034 / CIP 105152 / NBRC 16084 / F199) protein is Glutamate 5-kinase.